The sequence spans 347 residues: S-adenosylmethionine:tRNA ribosyltransferase-isomerase (347 aa).

The protein belongs to the QueA family. In terms of assembly, monomer.

The protein localises to the cytoplasm. The catalysed reaction is 7-aminomethyl-7-carbaguanosine(34) in tRNA + S-adenosyl-L-methionine = epoxyqueuosine(34) in tRNA + adenine + L-methionine + 2 H(+). Its pathway is tRNA modification; tRNA-queuosine biosynthesis. In terms of biological role, transfers and isomerizes the ribose moiety from AdoMet to the 7-aminomethyl group of 7-deazaguanine (preQ1-tRNA) to give epoxyqueuosine (oQ-tRNA). The chain is S-adenosylmethionine:tRNA ribosyltransferase-isomerase from Pseudomonas paraeruginosa (strain DSM 24068 / PA7) (Pseudomonas aeruginosa (strain PA7)).